The following is a 373-amino-acid chain: Cell division protein FtsZ 1 (373 aa).

GTP is bound by residues 51–55 (GAGCN), 138–140 (GTG), Glu-169, Arg-173, and Asp-216. The interval 354–373 (EESYFGEEERRPIKLDLDEL) is disordered. Basic and acidic residues predominate over residues 360 to 373 (EEERRPIKLDLDEL).

Belongs to the FtsZ family. In terms of assembly, homodimer. Polymerizes to form a dynamic ring structure in a strictly GTP-dependent manner. Interacts directly with several other division proteins.

It localises to the cytoplasm. Functionally, essential cell division protein that forms a contractile ring structure (Z ring) at the future cell division site. The regulation of the ring assembly controls the timing and the location of cell division. One of the functions of the FtsZ ring is to recruit other cell division proteins to the septum to produce a new cell wall between the dividing cells. Binds GTP and shows GTPase activity. The sequence is that of Cell division protein FtsZ 1 from Thermococcus kodakarensis (strain ATCC BAA-918 / JCM 12380 / KOD1) (Pyrococcus kodakaraensis (strain KOD1)).